Reading from the N-terminus, the 316-residue chain is Olfactory receptor 51J1 (316 aa).

At 1-31 (MKISNNSLGFLPTTFILVGIPGLESEHLWIS) the chain is on the extracellular side. A glycan (N-linked (GlcNAc...) asparagine) is linked at asparagine 5. A helical transmembrane segment spans residues 32–52 (VPFSLIYIIIFLGNGIILHVI). Residues 53 to 63 (RTDIALHQPMY) are Cytoplasmic-facing. A helical transmembrane segment spans residues 64-84 (LFLAMLALAEVRVSASTLPTV). The Extracellular segment spans residues 85-104 (LGIFLFGNTEISLEACLFPD). An intrachain disulfide couples cysteine 100 to cysteine 191. A helical transmembrane segment spans residues 105-125 (VLHPFFIHDGASCAAGHVFGP). Topologically, residues 126-161 (LYSHLQPTELHSYPDTAQGLWHRSYYRTEKHYAHGS) are cytoplasmic. A helical transmembrane segment spans residues 162–182 (VAHSLMASALLWPQCPLTFLL). The Extracellular portion of the chain corresponds to 183-191 (SAPQSYLSC). Residues 192 to 212 (GNISVNNIYGIFIVTSTFGLD) form a helical membrane-spanning segment. Residues 213–242 (SLLIVISYGLILHTVLGIATGEGRKKALNT) lie on the Cytoplasmic side of the membrane. Residues 243–263 (CGSHVCAVLAYYVPMIGLSIV) form a helical membrane-spanning segment. At 264–275 (HRLGHRVSPLLQ) the chain is on the extracellular side. A helical transmembrane segment spans residues 276–296 (AMMANAYLFFPPVVNPIVYSI). Topologically, residues 297–316 (KTKEIHGAIVRMLLEKRRRV) are cytoplasmic.

The protein belongs to the G-protein coupled receptor 1 family.

Its subcellular location is the cell membrane. Odorant receptor. The chain is Olfactory receptor 51J1 (OR51J1) from Homo sapiens (Human).